The primary structure comprises 94 residues: Selenoprotein K (94 aa).

The chain crosses the membrane as a helical span at residues 20–42 (LSLITDFFWGIAEFVVLFFKTLL). A disordered region spans residues 48 to 94 (KRRSYGNSSDSRYDDGRGPPGNPPRRMGRINHLRGPSPPPMAGGUGR). Sec-92 is a non-standard amino acid (selenocysteine).

Belongs to the selenoprotein K family. In terms of assembly, interacts with DERL1, DERL2, DERL3 and SELENOS. The SELENOK-SELENOS complex interacts with VCP. Interacts with ZDHHC6. Cleaved by CAPN2/m-calpain in resting macrophages but not in activated macrophages. Macrophage activation up-regulates expression of the calpain inhibitor CAST/calpastatin, resulting in inhibition of CAPN2 activity. In terms of processing, truncated SELENOK proteins produced by failed UGA/Sec decoding are ubiquitinated by the CRL2(KLHDC2) complex, which recognizes the diglycine (Gly-Gly) at the C-terminus of truncated SELENOK proteins. Highly expressed in heart.

The protein localises to the endoplasmic reticulum membrane. It localises to the cell membrane. Its function is as follows. Required for Ca(2+) flux in immune cells and plays a role in T-cell proliferation and in T-cell and neutrophil migration. Involved in endoplasmic reticulum-associated degradation (ERAD) of soluble glycosylated proteins. Required for palmitoylation and cell surface expression of CD36 and involved in macrophage uptake of low-density lipoprotein and in foam cell formation. Together with ZDHHC6, required for palmitoylation of ITPR1 in immune cells, leading to regulate ITPR1 stability and function. Plays a role in protection of cells from ER stress-induced apoptosis. Protects cells from oxidative stress when overexpressed in cardiomyocytes. This chain is Selenoprotein K, found in Homo sapiens (Human).